Here is a 187-residue protein sequence, read N- to C-terminus: UPF0301 protein VC_0467 (187 aa).

This sequence belongs to the UPF0301 (AlgH) family.

The polypeptide is UPF0301 protein VC_0467 (Vibrio cholerae serotype O1 (strain ATCC 39315 / El Tor Inaba N16961)).